Here is a 212-residue protein sequence, read N- to C-terminus: Riboflavin synthase (212 aa).

Lumazine-binding repeat units follow at residues 1 to 97 (MFTG…VGGH) and 98 to 195 (LVSG…VDSV). 2,4-dihydroxypteridine is bound by residues 4–6 (GIV), 48–50 (CLT), 62–67 (DIVEET), 101–103 (GHI), Lys137, 146–148 (SLT), and 160–165 (FLIPET).

Homotrimer.

It carries out the reaction 2 6,7-dimethyl-8-(1-D-ribityl)lumazine + H(+) = 5-amino-6-(D-ribitylamino)uracil + riboflavin. Its pathway is cofactor biosynthesis; riboflavin biosynthesis; riboflavin from 2-hydroxy-3-oxobutyl phosphate and 5-amino-6-(D-ribitylamino)uracil: step 2/2. In terms of biological role, catalyzes the dismutation of two molecules of 6,7-dimethyl-8-ribityllumazine, resulting in the formation of riboflavin and 5-amino-6-(D-ribitylamino)uracil. This chain is Riboflavin synthase (ribE), found in Buchnera aphidicola subsp. Baizongia pistaciae (strain Bp).